A 459-amino-acid chain; its full sequence is Cysteine--tRNA ligase (459 aa).

A Zn(2+)-binding site is contributed by C28. The 'HIGH' region motif lies at 30–40 (VTVYDLCHFGH). Residues C209, H234, and E238 each coordinate Zn(2+). The 'KMSKS' region signature appears at 266-270 (KMSKS). K269 lines the ATP pocket.

Belongs to the class-I aminoacyl-tRNA synthetase family. In terms of assembly, monomer. Requires Zn(2+) as cofactor.

Its subcellular location is the cytoplasm. The enzyme catalyses tRNA(Cys) + L-cysteine + ATP = L-cysteinyl-tRNA(Cys) + AMP + diphosphate. The chain is Cysteine--tRNA ligase from Actinobacillus pleuropneumoniae serotype 3 (strain JL03).